Here is a 444-residue protein sequence, read N- to C-terminus: CCA-adding enzyme (444 aa).

ATP-binding residues include Ser57 and Arg60. Ser57 and Arg60 together coordinate CTP. Mg(2+) is bound by residues Asp69, Asp71, and Asp124. Residues His147, Lys168, and Tyr177 each coordinate ATP. CTP is bound by residues His147, Lys168, and Tyr177.

The protein belongs to the tRNA nucleotidyltransferase/poly(A) polymerase family. Archaeal CCA-adding enzyme subfamily. Homodimer. Requires Mg(2+) as cofactor.

It carries out the reaction a tRNA precursor + 2 CTP + ATP = a tRNA with a 3' CCA end + 3 diphosphate. The enzyme catalyses a tRNA with a 3' CCA end + 2 CTP + ATP = a tRNA with a 3' CCACCA end + 3 diphosphate. Catalyzes the addition and repair of the essential 3'-terminal CCA sequence in tRNAs without using a nucleic acid template. Adds these three nucleotides in the order of C, C, and A to the tRNA nucleotide-73, using CTP and ATP as substrates and producing inorganic pyrophosphate. tRNA 3'-terminal CCA addition is required both for tRNA processing and repair. Also involved in tRNA surveillance by mediating tandem CCA addition to generate a CCACCA at the 3' terminus of unstable tRNAs. While stable tRNAs receive only 3'-terminal CCA, unstable tRNAs are marked with CCACCA and rapidly degraded. This is CCA-adding enzyme from Methanococcus maripaludis (strain DSM 14266 / JCM 13030 / NBRC 101832 / S2 / LL).